We begin with the raw amino-acid sequence, 242 residues long: Uridylate kinase (242 aa).

Residue Lys-16 to Gly-19 participates in ATP binding. Gly-58 contacts UMP. Positions 59 and 63 each coordinate ATP. Residues Asp-78 and Thr-139–Thr-146 each bind UMP. ATP-binding residues include Thr-166, Gln-167, Tyr-172, and Asp-175.

Belongs to the UMP kinase family. Homohexamer.

It localises to the cytoplasm. It catalyses the reaction UMP + ATP = UDP + ADP. It participates in pyrimidine metabolism; CTP biosynthesis via de novo pathway; UDP from UMP (UMPK route): step 1/1. Its activity is regulated as follows. Inhibited by UTP. Its function is as follows. Catalyzes the reversible phosphorylation of UMP to UDP. This chain is Uridylate kinase, found in Rickettsia canadensis (strain McKiel).